The sequence spans 580 residues: Keratin, type II cytoskeletal 5 (580 aa).

The segment at 1–161 is head; sequence MSRQSSVSFR…DPTIQRVRTE (161 aa). Phosphoserine is present on residues Ser-5, Ser-8, Ser-16, and Ser-21. Thr-24 is subject to Phosphothreonine; by CDK1. Residues Ser-26, Ser-36, Ser-47, Ser-61, Ser-68, Ser-72, Ser-75, and Ser-79 each carry the phosphoserine modification. Thr-145 carries the phosphothreonine; by CDK1 modification. A Phosphothreonine; by AURKB modification is found at Thr-160. The interval 162–197 is coil 1A; the sequence is EREQIKTLNNKFASFIDKVRFLEQQNKVLDTKWALL. Positions 162–475 constitute an IF rod domain; the sequence is EREQIKTLNN…KLLEGEECRL (314 aa). The linker 1 stretch occupies residues 198 to 216; sequence QEQGTKTIKQNLDPLFEQY. The segment at 217-309 is coil 1B; that stretch reads INNLRRQLDG…FFDAELSQMQ (93 aa). Positions 310–332 are linker 12; sequence THVSDTSVVLSMDNNRSLDLDSI. The tract at residues 333 to 471 is coil 2; it reads IAEVKAQYED…ATYRKLLEGE (139 aa). A tail region spans residues 472–580; it reads ECRLSGEGVG…TSSSRRSFKS (109 aa). Arg-526 is subject to Omega-N-methylarginine. The segment at 555–580 is disordered; sequence FGSGGGSGSSVKFVSTTSSSRRSFKS. Positions 563-580 are enriched in low complexity; the sequence is SSVKFVSTTSSSRRSFKS.

This sequence belongs to the intermediate filament family. As to quaternary structure, heterodimer of a type I and a type II keratin. Heterodimer with type I keratin KRT25 leading to the formation of keratin intermediate filament (KIF) network. Forms a heterodimer (via 2B domains) with KRT14 (via 2B domains). Interacts with PLEC isoform 1C, when in a heterodimer with KRT14. Interacts with TCHP. Interacts with EPPK1. Interacts with AMELX. Interacts with PKP1 (via N-terminus) and PKP2. Phosphorylated by CDK1, AURKB and Rho-kinase, phosphorylation is regulated by the cell cycle. Thr-24 phosphorylation, mediated by CDK1, peaks during prometaphase or metaphase cells with phosphorylated filamentous structures evident throughout the cytoplasm during early mitosis. CDK1 phosphorylates Thr-24 in mitotic cells at the site of injury. Post-translationally, O-glycosylated. As to expression, expressed in the corneal epithelium (at protein level). Expressed in the epidermis of the ear (at protein level). Expressed in the basal and spinous layers of the skin at birth (at protein level).

The protein localises to the cytoplasm. Its function is as follows. Required for the formation of keratin intermediate filaments in the basal epidermis and maintenance of the skin barrier in response to mechanical stress. Regulates the recruitment of Langerhans cells to the epidermis, potentially by modulation of the abundance of macrophage chemotactic cytokines, macrophage inflammatory cytokines and CTNND1 localization in keratinocytes. The polypeptide is Keratin, type II cytoskeletal 5 (Mus musculus (Mouse)).